A 283-amino-acid polypeptide reads, in one-letter code: Polyamine aminopropyltransferase (283 aa).

In terms of domain architecture, PABS spans 5 to 241; it reads NNWYIEHFER…GWWSVTMARK (237 aa). Residue glutamine 35 coordinates S-methyl-5'-thioadenosine. Residues histidine 66 and aspartate 90 each coordinate spermidine. Residues aspartate 110 and 141–142 each bind S-methyl-5'-thioadenosine; that span reads DG. Aspartate 160 functions as the Proton acceptor in the catalytic mechanism. 160–163 lines the spermidine pocket; it reads DSTD. Proline 167 is a binding site for S-methyl-5'-thioadenosine.

The protein belongs to the spermidine/spermine synthase family. As to quaternary structure, homodimer or homotetramer.

It localises to the cytoplasm. The catalysed reaction is S-adenosyl 3-(methylsulfanyl)propylamine + putrescine = S-methyl-5'-thioadenosine + spermidine + H(+). It participates in amine and polyamine biosynthesis; spermidine biosynthesis; spermidine from putrescine: step 1/1. In terms of biological role, catalyzes the irreversible transfer of a propylamine group from the amino donor S-adenosylmethioninamine (decarboxy-AdoMet) to putrescine (1,4-diaminobutane) to yield spermidine. The sequence is that of Polyamine aminopropyltransferase from Stenotrophomonas maltophilia (strain K279a).